Consider the following 454-residue polypeptide: UDP-N-acetylmuramate--L-alanine ligase (454 aa).

Residue 113–119 (GSHGKTT) participates in ATP binding.

It belongs to the MurCDEF family.

It is found in the cytoplasm. It carries out the reaction UDP-N-acetyl-alpha-D-muramate + L-alanine + ATP = UDP-N-acetyl-alpha-D-muramoyl-L-alanine + ADP + phosphate + H(+). Its pathway is cell wall biogenesis; peptidoglycan biosynthesis. Functionally, cell wall formation. The protein is UDP-N-acetylmuramate--L-alanine ligase of Sulfurihydrogenibium sp. (strain YO3AOP1).